Reading from the N-terminus, the 386-residue chain is 2,3-diketo-5-methylthiopentyl-1-phosphate enolase (386 aa).

Lys-85 (proton acceptor) is an active-site residue. Residues Lys-131, 157–160 (KDDE), His-248, Gly-316, and 338–339 (GT) contribute to the substrate site. Mg(2+) contacts are provided by Lys-157, Asp-159, and Glu-160. Lys-157 bears the N6-carboxylysine mark.

It belongs to the RuBisCO large chain family. Type IV subfamily. As to quaternary structure, homodimer. It depends on Mg(2+) as a cofactor.

The catalysed reaction is 5-methylsulfanyl-2,3-dioxopentyl phosphate = 2-hydroxy-5-methylsulfanyl-3-oxopent-1-enyl phosphate. It functions in the pathway amino-acid biosynthesis; L-methionine biosynthesis via salvage pathway; L-methionine from S-methyl-5-thio-alpha-D-ribose 1-phosphate: step 3/6. Functionally, catalyzes the enolization of 2,3-diketo-5-methylthiopentyl-1-phosphate (DK-MTP-1-P) into 2-hydroxy-3-keto-5-methylthiopentenyl-1-phosphate (HK-MTPenyl-1-P). In Microcystis aeruginosa, this protein is 2,3-diketo-5-methylthiopentyl-1-phosphate enolase (mtnW).